A 512-amino-acid chain; its full sequence is Probable amidase At4g34880 (512 aa).

Residues Lys117 and Ser198 each act as charge relay system in the active site. Catalysis depends on Ser222, which acts as the Acyl-ester intermediate.

This sequence belongs to the amidase family. As to expression, expressed in vasculature of roots, cotyledons, leaves and sepals.

It catalyses the reaction a monocarboxylic acid amide + H2O = a monocarboxylate + NH4(+). This chain is Probable amidase At4g34880, found in Arabidopsis thaliana (Mouse-ear cress).